Reading from the N-terminus, the 728-residue chain is Phosphoribosylformylglycinamidine synthase subunit PurL (728 aa).

The active site involves His-42. Residues Tyr-45 and Lys-84 each coordinate ATP. Glu-86 lines the Mg(2+) pocket. Substrate-binding positions include 87-90 (SHNH) and Arg-109. The active-site Proton acceptor is His-88. Asp-110 is a binding site for Mg(2+). Substrate is bound at residue Gln-237. Mg(2+) is bound at residue Asp-265. Substrate is bound at residue 309–311 (ESQ). Positions 491 and 528 each coordinate ATP. Asn-529 serves as a coordination point for Mg(2+). Ser-531 is a binding site for substrate.

This sequence belongs to the FGAMS family. Monomer. Part of the FGAM synthase complex composed of 1 PurL, 1 PurQ and 2 PurS subunits.

The protein resides in the cytoplasm. The catalysed reaction is N(2)-formyl-N(1)-(5-phospho-beta-D-ribosyl)glycinamide + L-glutamine + ATP + H2O = 2-formamido-N(1)-(5-O-phospho-beta-D-ribosyl)acetamidine + L-glutamate + ADP + phosphate + H(+). Its pathway is purine metabolism; IMP biosynthesis via de novo pathway; 5-amino-1-(5-phospho-D-ribosyl)imidazole from N(2)-formyl-N(1)-(5-phospho-D-ribosyl)glycinamide: step 1/2. Part of the phosphoribosylformylglycinamidine synthase complex involved in the purines biosynthetic pathway. Catalyzes the ATP-dependent conversion of formylglycinamide ribonucleotide (FGAR) and glutamine to yield formylglycinamidine ribonucleotide (FGAM) and glutamate. The FGAM synthase complex is composed of three subunits. PurQ produces an ammonia molecule by converting glutamine to glutamate. PurL transfers the ammonia molecule to FGAR to form FGAM in an ATP-dependent manner. PurS interacts with PurQ and PurL and is thought to assist in the transfer of the ammonia molecule from PurQ to PurL. The protein is Phosphoribosylformylglycinamidine synthase subunit PurL of Campylobacter jejuni subsp. jejuni serotype O:2 (strain ATCC 700819 / NCTC 11168).